The following is a 485-amino-acid chain: Adenosylhomocysteinase (485 aa).

Positions 64, 139, and 205 each coordinate substrate. 206–208 (TTT) contributes to the NAD(+) binding site. Substrate is bound by residues Lys-235 and Asp-239. NAD(+) is bound by residues Asn-240, 269–274 (GYGDVG), Glu-292, Asn-327, 348–350 (IGH), and Asn-397.

It belongs to the adenosylhomocysteinase family. Homotetramer. The cofactor is NAD(+).

The enzyme catalyses S-adenosyl-L-homocysteine + H2O = L-homocysteine + adenosine. The protein operates within amino-acid biosynthesis; L-homocysteine biosynthesis; L-homocysteine from S-adenosyl-L-homocysteine: step 1/1. Functionally, adenosylhomocysteine is a competitive inhibitor of S-adenosyl-L-methionine-dependent methyl transferase reactions; therefore adenosylhomocysteinase may play a key role in the control of methylations via regulation of the intracellular concentration of adenosylhomocysteine. The protein is Adenosylhomocysteinase (SAHH) of Triticum aestivum (Wheat).